The following is a 71-amino-acid chain: Large ribosomal subunit protein uL29 (71 aa).

Belongs to the universal ribosomal protein uL29 family.

This is Large ribosomal subunit protein uL29 from Rickettsia africae (strain ESF-5).